Here is a 220-residue protein sequence, read N- to C-terminus: Redox-sensing transcriptional repressor Rex (220 aa).

Positions 25–64 form a DNA-binding region, H-T-H motif; it reads WYLSNVKLLKQKGERYVSSTQISKEINIDASQIAKDLSYV. 99–104 is a binding site for NAD(+); it reads GVGSLG.

The protein belongs to the transcriptional regulatory Rex family. In terms of assembly, homodimer.

It localises to the cytoplasm. In terms of biological role, modulates transcription in response to changes in cellular NADH/NAD(+) redox state. The polypeptide is Redox-sensing transcriptional repressor Rex (Bacteroides fragilis (strain ATCC 25285 / DSM 2151 / CCUG 4856 / JCM 11019 / LMG 10263 / NCTC 9343 / Onslow / VPI 2553 / EN-2)).